Consider the following 138-residue polypeptide: Large ribosomal subunit protein bL17 (138 aa).

This sequence belongs to the bacterial ribosomal protein bL17 family. In terms of assembly, part of the 50S ribosomal subunit. Contacts protein L32.

In Granulibacter bethesdensis (strain ATCC BAA-1260 / CGDNIH1), this protein is Large ribosomal subunit protein bL17.